Consider the following 518-residue polypeptide: 12S seed storage globulin 2 (518 aa).

The N-terminal stretch at 1–24 (MATTRFPSLLFYSYIFLLCNGSMA) is a signal peptide. Intrachain disulfides connect C45–C78 and C121–C324. The Cupin type-1 1 domain occupies 50–240 (LQAFEPLRQV…ALGISQQVAQ (191 aa)). The interval 280–311 (IQSQEEQSTQYQVGQSPQYQEGQSTQYQPGQS) is disordered. One can recognise a Cupin type-1 2 domain in the interval 330–479 (QNIENPKRAD…AYRISRQEAQ (150 aa)). Residues 482-518 (KNNRGEEFDAFTPKFTQTGSQSYQDEGESSSTEKASE) are disordered. A compositionally biased stretch (polar residues) spans 495–518 (KFTQTGSQSYQDEGESSSTEKASE).

This sequence belongs to the 11S seed storage protein (globulins) family. As to quaternary structure, hexamer; each subunit is composed of an acidic and a basic chain derived from a single precursor and linked by a disulfide bond.

Its function is as follows. This is a seed storage protein. The sequence is that of 12S seed storage globulin 2 from Avena sativa (Oat).